The sequence spans 201 residues: Recombination protein RecR (201 aa).

Residues 57-72 (CRDCRTFTEQEVCTIC) form a C4-type zinc finger. The Toprim domain maps to 81–176 (GQICVVESPA…LASRIAHGVP (96 aa)).

The protein belongs to the RecR family.

May play a role in DNA repair. It seems to be involved in an RecBC-independent recombinational process of DNA repair. It may act with RecF and RecO. The polypeptide is Recombination protein RecR (Edwardsiella ictaluri (strain 93-146)).